Reading from the N-terminus, the 187-residue chain is Ribonuclease HII (187 aa).

Residues 1 to 187 form the RNase H type-2 domain; it reads MIILGIDEAG…YKPVQVLLNE (187 aa). Residues aspartate 7, glutamate 8, and aspartate 99 each coordinate a divalent metal cation.

This sequence belongs to the RNase HII family. Requires Mn(2+) as cofactor. The cofactor is Mg(2+).

It is found in the cytoplasm. The catalysed reaction is Endonucleolytic cleavage to 5'-phosphomonoester.. In terms of biological role, endonuclease that specifically degrades the RNA of RNA-DNA hybrids. The polypeptide is Ribonuclease HII (Francisella tularensis subsp. mediasiatica (strain FSC147)).